Consider the following 65-residue polypeptide: Hirudin-3 (65 aa).

The interval Val1–Tyr3 is interaction with thrombin active site. Cystine bridges form between Cys6–Cys14, Cys16–Cys28, and Cys22–Cys39. The tract at residues Cys39–Gln65 is disordered. The O-linked (GalNAc...) threonine glycan is linked to Thr45. The segment at Asp55–Gln65 is interaction with fibrinogen-binding exosite of thrombin. Residues Asp55–Gln65 show a composition bias toward acidic residues. Tyr63 carries the post-translational modification Sulfotyrosine.

The protein belongs to the protease inhibitor I14 (hirudin) family.

It is found in the secreted. Its function is as follows. Hirudin is a potent thrombin-specific protease inhibitor. It forms a stable non-covalent complex with alpha-thrombin, thereby abolishing its ability to cleave fibrinogen. The protein is Hirudin-3 of Hirudo medicinalis (Medicinal leech).